The following is a 96-amino-acid chain: uncharacterized protein (96 aa).

This is an uncharacterized protein from Bacillus subtilis (strain 168).